Consider the following 291-residue polypeptide: tRNA dimethylallyltransferase (291 aa).

8–15 (GSTASGKT) serves as a coordination point for ATP. 10 to 15 (TASGKT) lines the substrate pocket. Residues 33–36 (DSLC) form an interaction with substrate tRNA region.

This sequence belongs to the IPP transferase family. Monomer. Mg(2+) serves as cofactor.

It catalyses the reaction adenosine(37) in tRNA + dimethylallyl diphosphate = N(6)-dimethylallyladenosine(37) in tRNA + diphosphate. Catalyzes the transfer of a dimethylallyl group onto the adenine at position 37 in tRNAs that read codons beginning with uridine, leading to the formation of N6-(dimethylallyl)adenosine (i(6)A). This Aliarcobacter butzleri (strain RM4018) (Arcobacter butzleri) protein is tRNA dimethylallyltransferase.